A 164-amino-acid polypeptide reads, in one-letter code: Respiratory growth induced protein 2 (164 aa).

Belongs to the RGI1 family.

The protein localises to the cytoplasm. Its function is as follows. Involved in the control of energetic metabolism and significantly contribute to cell fitness, especially under respiratory growth conditions. This chain is Respiratory growth induced protein 2 (RGI2), found in Saccharomyces cerevisiae (strain RM11-1a) (Baker's yeast).